We begin with the raw amino-acid sequence, 282 residues long: Exo-glucosaminidase LytG (282 aa).

A signal peptide spans 1–29 (MARKKLKKRKLLISLFFLVSIPLALFVLA). The 79-residue stretch at 203–281 (SLKSVDLNAS…DDSAVEIKEA (79 aa)) folds into the GW domain.

It belongs to the glycosyl hydrolase 73 family. The cofactor is Mg(2+).

It localises to the secreted. It is found in the cell wall. Its activity is regulated as follows. Inhibited by EDTA. In terms of biological role, is the major glucosaminidase responsible for peptidoglycan structural determination during vegetative growth. Catalyzes the hydrolysis of 1,4-beta-linkages between N-acetyl-D-glucosamine and N-acetylmuramic acid residues in peptidoglycan. Acts processively from the ends of the glycan strands. Also plays a role in motility, chemotaxis and cell division. The polypeptide is Exo-glucosaminidase LytG (lytG) (Bacillus subtilis (strain 168)).